The chain runs to 879 residues: Phosphoenolpyruvate carboxylase (879 aa).

Catalysis depends on residues His137 and Lys545.

It belongs to the PEPCase type 1 family. The cofactor is Mg(2+).

The catalysed reaction is oxaloacetate + phosphate = phosphoenolpyruvate + hydrogencarbonate. Forms oxaloacetate, a four-carbon dicarboxylic acid source for the tricarboxylic acid cycle. This Yersinia enterocolitica serotype O:8 / biotype 1B (strain NCTC 13174 / 8081) protein is Phosphoenolpyruvate carboxylase.